We begin with the raw amino-acid sequence, 414 residues long: MDRLNNLATQLEQNPAKGLDAITSKNPDDVVITAAYRTAHTKGGKGLFKDTSSSELLASLLEGLVKESKIDPKLIGDVVCGNVLAAGAGATEHRAACLVAGIPETVPFVALNRQCSSGLMAVNDVANKIRAGQIDIGIGCGVESMSNQYGPNSVTPFSNKFQNNEEAKKCLIPMGITSENVAAKYNVSRKAQDAFAAKSYEKAAAAQAAGKFDQEILPIKTTVLDDDDNEKEVTVNKDDGIRPGVTAEKLGKLKPAFSAEGTTHAGNASQISDGAGAVLLMRRSVAEKLGQPILAKFVHCKTVGVPPELMGIGPAYAIPAVLEDLGLTVNDVDVFEINEAFASQALFSIQHCGIDESKVNPRGGAIAIGHPLGATGARQFATLLSELKESGKKVGVTSMCIGTGMGAASLVVAE.

Residues 1–9 (MDRLNNLAT) constitute a peroxisome transit peptide. Positions 1–9 (MDRLNNLAT) are PTS2-type peroxisomal targeting signal. Catalysis depends on Cys-115, which acts as the Acyl-thioester intermediate. Residues His-370 and Cys-400 each act as proton acceptor in the active site.

The protein belongs to the thiolase-like superfamily. Thiolase family. Homodimer. Interacts (via PTS2-type peroxisomal targeting signal region) with PEX7; leading to its translocation into peroxisomes.

The protein localises to the peroxisome. The enzyme catalyses an acyl-CoA + acetyl-CoA = a 3-oxoacyl-CoA + CoA. It functions in the pathway lipid metabolism; fatty acid metabolism. Responsible for the thiolytic cleavage of straight chain 3-keto fatty acyl-CoAs (3-oxoacyl-CoAs). The protein is 3-ketoacyl-CoA thiolase, peroxisomal (POT1) of Yarrowia lipolytica (strain CLIB 122 / E 150) (Yeast).